A 351-amino-acid polypeptide reads, in one-letter code: Tetraacyldisaccharide 4'-kinase (351 aa).

47–54 (KAGGTGKT) serves as a coordination point for ATP.

Belongs to the LpxK family.

The catalysed reaction is a lipid A disaccharide + ATP = a lipid IVA + ADP + H(+). The protein operates within glycolipid biosynthesis; lipid IV(A) biosynthesis; lipid IV(A) from (3R)-3-hydroxytetradecanoyl-[acyl-carrier-protein] and UDP-N-acetyl-alpha-D-glucosamine: step 6/6. Its function is as follows. Transfers the gamma-phosphate of ATP to the 4'-position of a tetraacyldisaccharide 1-phosphate intermediate (termed DS-1-P) to form tetraacyldisaccharide 1,4'-bis-phosphate (lipid IVA). The sequence is that of Tetraacyldisaccharide 4'-kinase from Cytophaga hutchinsonii (strain ATCC 33406 / DSM 1761 / CIP 103989 / NBRC 15051 / NCIMB 9469 / D465).